A 276-amino-acid polypeptide reads, in one-letter code: Probable transposase for insertion sequence element IS702 (276 aa).

The region spanning Met118–Arg256 is the DDE Tnp4 domain. Residues Asp119, Asp170, Asp190, and Glu234 each coordinate a divalent metal cation.

This sequence belongs to the transposase 11 family. It depends on a divalent metal cation as a cofactor.

Functionally, involved in the transposition of the insertion sequence. The protein is Probable transposase for insertion sequence element IS702 of Microchaete diplosiphon (Fremyella diplosiphon).